A 331-amino-acid chain; its full sequence is DNA-directed RNA polymerase subunit alpha (331 aa).

The segment at 1-237 (MQSFEKEFLK…DQLSSFIDLK (237 aa)) is alpha N-terminal domain (alpha-NTD). Positions 251–331 (FDPSLLNLVD…NWPPKHLSEQ (81 aa)) are alpha C-terminal domain (alpha-CTD).

The protein belongs to the RNA polymerase alpha chain family. In terms of assembly, homodimer. The RNAP catalytic core consists of 2 alpha, 1 beta, 1 beta' and 1 omega subunit. When a sigma factor is associated with the core the holoenzyme is formed, which can initiate transcription.

The catalysed reaction is RNA(n) + a ribonucleoside 5'-triphosphate = RNA(n+1) + diphosphate. In terms of biological role, DNA-dependent RNA polymerase catalyzes the transcription of DNA into RNA using the four ribonucleoside triphosphates as substrates. This Blochmanniella floridana protein is DNA-directed RNA polymerase subunit alpha.